The following is a 313-amino-acid chain: MATVALLRSLRRRELHAAHISAYKFSSASAGGRTTELRLHGVKDIIAVASGKGGVGKSSTAVNLAVALANKCELKIGLLDADVYGPSVPIMMNINQKPQVNQDMKMIPVENYGVKCMSMGLLVEKDAPLVWRGPMVMSALAKMTKGVDWGDLDILVVDMPPGTGDAQISISQNLKLSGAVIVSTPQDVALADANRGISMFDKVRVPILGLVENMSCFVCPHCNEPSFIFGKEGARRTAAKKGLKLIGEIPLEMSIREGSDEGVPVVVSSPGSIVSKAYQDLAQNVVKGLKELRENPDNEIQMKLNVPHSSHSS.

A mitochondrion-targeting transit peptide spans 1-22 (MATVALLRSLRRRELHAAHISA). 51–58 (GKGGVGKS) serves as a coordination point for ATP.

The protein belongs to the Mrp/NBP35 ATP-binding proteins family. Requires [4Fe-4S] cluster as cofactor.

The protein resides in the mitochondrion matrix. Its function is as follows. Essential during early vegetative growth. Required for the assembly of the mitochondrial membrane respiratory chain NADH dehydrogenase (Complex I). Involved in mitochondrial translation activity. May deliver of one or more Fe-S clusters to complex I subunits. In Arabidopsis thaliana (Mouse-ear cress), this protein is Iron-sulfur protein required for NADH dehydrogenase, mitochondrial.